A 165-amino-acid polypeptide reads, in one-letter code: 2-C-methyl-D-erythritol 2,4-cyclodiphosphate synthase (165 aa).

2 residues coordinate a divalent metal cation: Asp-13 and His-15. 4-CDP-2-C-methyl-D-erythritol 2-phosphate is bound by residues 13–15 (DRH) and 39–40 (HS). Position 47 (His-47) interacts with a divalent metal cation. Residues 61–63 (DIG) and Phe-141 contribute to the 4-CDP-2-C-methyl-D-erythritol 2-phosphate site.

Belongs to the IspF family. In terms of assembly, homotrimer. Requires a divalent metal cation as cofactor.

It carries out the reaction 4-CDP-2-C-methyl-D-erythritol 2-phosphate = 2-C-methyl-D-erythritol 2,4-cyclic diphosphate + CMP. It functions in the pathway isoprenoid biosynthesis; isopentenyl diphosphate biosynthesis via DXP pathway; isopentenyl diphosphate from 1-deoxy-D-xylulose 5-phosphate: step 4/6. Its function is as follows. Involved in the biosynthesis of isopentenyl diphosphate (IPP) and dimethylallyl diphosphate (DMAPP), two major building blocks of isoprenoid compounds. Catalyzes the conversion of 4-diphosphocytidyl-2-C-methyl-D-erythritol 2-phosphate (CDP-ME2P) to 2-C-methyl-D-erythritol 2,4-cyclodiphosphate (ME-CPP) with a corresponding release of cytidine 5-monophosphate (CMP). In Thermotoga neapolitana (strain ATCC 49049 / DSM 4359 / NBRC 107923 / NS-E), this protein is 2-C-methyl-D-erythritol 2,4-cyclodiphosphate synthase.